Reading from the N-terminus, the 296-residue chain is mRNA export factor rsm1 (296 aa).

Residues 40-174 (PWSREEFLRR…VSTHLPEEMT (135 aa)) form a C3HC-type zinc finger.

Its subcellular location is the cytoplasm. It localises to the nucleus. Involved in the export of mRNA from the nucleus to the cytoplasm. The chain is mRNA export factor rsm1 (rsm1) from Schizosaccharomyces pombe (strain 972 / ATCC 24843) (Fission yeast).